A 362-amino-acid chain; its full sequence is 3-isopropylmalate dehydrogenase (362 aa).

Residue 75–88 coordinates NAD(+); that stretch reads GPKWANLPPTEQPE. Substrate is bound by residues Arg96, Arg106, Arg135, and Asp224. Mg(2+)-binding residues include Asp224, Asp248, and Asp252. Residue 282 to 294 participates in NAD(+) binding; it reads GSAPDIAGLGVAN.

This sequence belongs to the isocitrate and isopropylmalate dehydrogenases family. LeuB type 1 subfamily. Homodimer. The cofactor is Mg(2+). Mn(2+) is required as a cofactor.

Its subcellular location is the cytoplasm. The enzyme catalyses (2R,3S)-3-isopropylmalate + NAD(+) = 4-methyl-2-oxopentanoate + CO2 + NADH. Its pathway is amino-acid biosynthesis; L-leucine biosynthesis; L-leucine from 3-methyl-2-oxobutanoate: step 3/4. Its function is as follows. Catalyzes the oxidation of 3-carboxy-2-hydroxy-4-methylpentanoate (3-isopropylmalate) to 3-carboxy-4-methyl-2-oxopentanoate. The product decarboxylates to 4-methyl-2 oxopentanoate. The polypeptide is 3-isopropylmalate dehydrogenase (Colwellia psychrerythraea (strain 34H / ATCC BAA-681) (Vibrio psychroerythus)).